The chain runs to 286 residues: tRNA uridine(34) hydroxylase (286 aa).

The 96-residue stretch at 130–225 folds into the Rhodanese domain; it reads RGDDVVFFDG…YGETFGDRGL (96 aa). Cysteine 185 (cysteine persulfide intermediate) is an active-site residue.

Belongs to the TrhO family.

The catalysed reaction is uridine(34) in tRNA + AH2 + O2 = 5-hydroxyuridine(34) in tRNA + A + H2O. In terms of biological role, catalyzes oxygen-dependent 5-hydroxyuridine (ho5U) modification at position 34 in tRNAs. This chain is tRNA uridine(34) hydroxylase, found in Rhodococcus erythropolis (strain PR4 / NBRC 100887).